The primary structure comprises 727 residues: Pre-B-cell leukemia transcription factor-interacting protein 1 (727 aa).

The segment covering Met-1–Ser-10 has biased composition (polar residues). Residues Met-1–Val-169 form a disordered region. Residues Ser-131, Ser-142, Ser-143, and Ser-144 each carry the phosphoserine modification. At Thr-148 the chain carries Phosphothreonine. Ser-164 is subject to Phosphoserine. Coiled coils occupy residues Phe-270 to Asp-350 and Asp-377 to Leu-405. Residues Gln-446–Asp-456 are compositionally biased toward polar residues. Disordered regions lie at residues Gln-446–Asp-565 and Leu-694–Gly-727. Residues Trp-473–Ser-563 are compositionally biased toward basic and acidic residues. A Nuclear localization signal motif is present at residues Gln-486–Trp-506. Ser-563 carries the post-translational modification Phosphoserine. The Nuclear localization signal motif lies at Asp-691–Glu-716. A compositionally biased stretch (basic residues) spans Leu-694 to Lys-703.

Interacts with ESR1, PBX1, PBX2 and PBX3. Interacts with TEX11.

The protein localises to the cytoplasm. It localises to the cytoskeleton. The protein resides in the nucleus. Its function is as follows. Regulator of pre-B-cell leukemia transcription factors (BPXs) function. Inhibits the binding of PBX1-HOX complex to DNA and blocks the transcriptional activity of E2A-PBX1. Tethers estrogen receptor-alpha (ESR1) to microtubules and allows them to influence estrogen receptors-alpha signaling. This chain is Pre-B-cell leukemia transcription factor-interacting protein 1 (Pbxip1), found in Mus musculus (Mouse).